The chain runs to 413 residues: High zinc activated nuclear receptor protein (413 aa).

The nuclear receptor DNA-binding region spans 11–86 (LGNCKICLQR…EGMKIELVQL (76 aa)). 2 NR C4-type zinc fingers span residues 14–34 (CKIC…CRAC) and 50–69 (CKEK…CRSC). The segment at 101-412 (SIDPLFTPNV…TSQCIVHTKN (312 aa)) is required for zinc-binding. In terms of domain architecture, NR LBD spans 135-396 (QMTSGYAMFL…VCCKNFKEDA (262 aa)).

It belongs to the nuclear hormone receptor family. As to expression, weakly expressed in intestinal cells in the absence of zinc supplementation. Upon zinc supplementation, accumulates in alimentary tract cells, and it is mainly expressed in the intestine.

It is found in the nucleus. The protein resides in the cytoplasm. Nuclear receptor transcription factor that binds to DNA enhancer elements to promote the transcription of genes required to maintain micronutrient homeostasis. Direct binding to its ligand zinc allows for nuclear accumulation and activation, which thereby induces the transcription of genes required to promote the storage and detoxification of excess dietary zinc. This in turn, allows for internal zinc levels to be detected and regulated. The protein is High zinc activated nuclear receptor protein of Caenorhabditis elegans.